Reading from the N-terminus, the 216-residue chain is Ras-related protein RABE1a (216 aa).

22–29 (GDSGVGKS) lines the GTP pocket. An Effector region motif is present at residues 44–52 (FITTIGIDF). GTP-binding positions include 70-74 (DTAGQ), 128-131 (NKAD), and 159-160 (SA). The interval 185–216 (DARAEPQTIKINQSDQGAGTSQATQKSACCGT) is disordered. The span at 193-216 (IKINQSDQGAGTSQATQKSACCGT) shows a compositional bias: polar residues. S-geranylgeranyl cysteine attachment occurs at residues cysteine 213 and cysteine 214.

The protein belongs to the small GTPase superfamily. Rab family. As to quaternary structure, interacts with PI5K2.

The protein resides in the golgi apparatus membrane. It is found in the cell membrane. Its function is as follows. Involved in membrane trafficking from the Golgi to the plasma membrane. The chain is Ras-related protein RABE1a (RABE1A) from Arabidopsis thaliana (Mouse-ear cress).